We begin with the raw amino-acid sequence, 390 residues long: Elongation factor Tu 1 (390 aa).

The 192-residue stretch at 10-201 folds into the tr-type G domain; that stretch reads KPHVNVGTIG…LDEYVAVPPR (192 aa). The segment at 19-26 is G1; that stretch reads GHVDHGKT. 19–26 contributes to the GTP binding site; that stretch reads GHVDHGKT. T26 contributes to the Mg(2+) binding site. Positions 55–59 are G2; sequence GITIA. The interval 76–79 is G3; that stretch reads DCPG. Residues 76-80 and 131-134 contribute to the GTP site; these read DCPGH and NKAD. Positions 131–134 are G4; the sequence is NKAD. Residues 168-170 form a G5 region; it reads SAL.

It belongs to the TRAFAC class translation factor GTPase superfamily. Classic translation factor GTPase family. EF-Tu/EF-1A subfamily. Monomer.

The protein localises to the cytoplasm. It catalyses the reaction GTP + H2O = GDP + phosphate + H(+). In terms of biological role, GTP hydrolase that promotes the GTP-dependent binding of aminoacyl-tRNA to the A-site of ribosomes during protein biosynthesis. The sequence is that of Elongation factor Tu 1 from Wolbachia pipientis wMel.